The chain runs to 955 residues: 2-oxoglutarate dehydrogenase E1 component (955 aa).

It belongs to the alpha-ketoglutarate dehydrogenase family. As to quaternary structure, homodimer. Part of the 2-oxoglutarate dehydrogenase (OGDH) complex composed of E1 (2-oxoglutarate dehydrogenase), E2 (dihydrolipoamide succinyltransferase) and E3 (dihydrolipoamide dehydrogenase); the complex contains multiple copies of the three enzymatic components (E1, E2 and E3). The cofactor is thiamine diphosphate.

It carries out the reaction N(6)-[(R)-lipoyl]-L-lysyl-[protein] + 2-oxoglutarate + H(+) = N(6)-[(R)-S(8)-succinyldihydrolipoyl]-L-lysyl-[protein] + CO2. Its function is as follows. E1 component of the 2-oxoglutarate dehydrogenase (OGDH) complex which catalyzes the decarboxylation of 2-oxoglutarate, the first step in the conversion of 2-oxoglutarate to succinyl-CoA and CO(2). The sequence is that of 2-oxoglutarate dehydrogenase E1 component from Bacillus cereus (strain G9842).